Reading from the N-terminus, the 175-residue chain is MFIDKIKAKANNDEINVIIEIPMNSGPIKYEFDKESGAVFVDRFMQTTMSYPCNYGFIPHTLSNDGDPVDVLVVSHHPVVPGSVIKCRAVGVLMMEDESGFDEKIIAVPTSKLDITFDHIKELDDVCEMLKKRIVHFFEHYKDLEKGKWVKVTGWENKAKADSLIEEGIERVEKM.

Residues Lys29, Arg43, and Tyr55 each coordinate substrate. Mg(2+) contacts are provided by Asp65, Asp70, and Asp102. Tyr141 provides a ligand contact to substrate.

It belongs to the PPase family. In terms of assembly, homohexamer. The cofactor is Mg(2+).

It is found in the cytoplasm. The catalysed reaction is diphosphate + H2O = 2 phosphate + H(+). Functionally, catalyzes the hydrolysis of inorganic pyrophosphate (PPi) forming two phosphate ions. In Rickettsia bellii (strain RML369-C), this protein is Inorganic pyrophosphatase.